The chain runs to 395 residues: Homoserine O-acetyltransferase (395 aa).

The region spanning 65–363 (PIVLIEHALT…SPTGHDGFLI (299 aa)) is the AB hydrolase-1 domain. Catalysis depends on serine 160, which acts as the Nucleophile. Arginine 230 provides a ligand contact to substrate. Residues aspartate 328 and histidine 358 contribute to the active site. A substrate-binding site is contributed by aspartate 359.

The protein belongs to the AB hydrolase superfamily. MetX family. Homodimer.

It is found in the cytoplasm. It carries out the reaction L-homoserine + acetyl-CoA = O-acetyl-L-homoserine + CoA. It participates in amino-acid biosynthesis; L-methionine biosynthesis via de novo pathway; O-acetyl-L-homoserine from L-homoserine: step 1/1. Its function is as follows. Transfers an acetyl group from acetyl-CoA to L-homoserine, forming acetyl-L-homoserine. The protein is Homoserine O-acetyltransferase of Corynebacterium jeikeium (strain K411).